Here is a 61-residue protein sequence, read N- to C-terminus: Large ribosomal subunit protein bL28 (61 aa).

Belongs to the bacterial ribosomal protein bL28 family.

This is Large ribosomal subunit protein bL28 (rpmB) from Geobacillus stearothermophilus (Bacillus stearothermophilus).